A 435-amino-acid polypeptide reads, in one-letter code: T-cell defective protein 2 (435 aa).

A disordered region spans residues 65-146; it reads NASTSFQSQP…KTPDSLRKSI (82 aa). A coiled-coil region spans residues 322–352; that stretch reads TKISAKKEKEQKKSAAKEAALKEAKEKEMRI. Residues 393–419 are disordered; it reads FFKANPPPAPRAPQAPELASGPRRIPT.

In terms of tissue distribution, strongly expressed in the cytoplasm of the pharynx muscle cells and several head neurons, probably the IL1s or IL2s, throughout development. Also expressed in some other unidentified neurons in the tail region. Weakly expressed in the nuclei of the T-cells and the T-cell daughters. Not expressed in gonads and in P12 cell.

Its subcellular location is the nucleus. It localises to the cytoplasm. Its function is as follows. May act synergistically with the Wnt pathways to control T-cell fate specification, gonad development, and P12 cell fate specification. Required for the distribution of pop-1 and tlp-1 proteins. The sequence is that of T-cell defective protein 2 (tcl-2) from Caenorhabditis elegans.